Consider the following 334-residue polypeptide: L-lactate dehydrogenase A chain (334 aa).

NAD(+) contacts are provided by residues 30 to 58 (GQVG…LEDK) and Arg-100. The substrate site is built by Arg-107, Asn-139, and Arg-170. Asn-139 contributes to the NAD(+) binding site. His-194 functions as the Proton acceptor in the catalytic mechanism. Substrate is bound at residue Thr-249.

This sequence belongs to the LDH/MDH superfamily. LDH family. In terms of assembly, homotetramer.

Its subcellular location is the cytoplasm. The catalysed reaction is (S)-lactate + NAD(+) = pyruvate + NADH + H(+). It functions in the pathway fermentation; pyruvate fermentation to lactate; (S)-lactate from pyruvate: step 1/1. Its function is as follows. Interconverts simultaneously and stereospecifically pyruvate and lactate with concomitant interconversion of NADH and NAD(+). The chain is L-lactate dehydrogenase A chain (ldha) from Xenopus laevis (African clawed frog).